A 230-amino-acid chain; its full sequence is Uracil-DNA glycosylase (230 aa).

Asp65 serves as the catalytic Proton acceptor.

This sequence belongs to the uracil-DNA glycosylase (UDG) superfamily. UNG family.

The protein resides in the cytoplasm. It catalyses the reaction Hydrolyzes single-stranded DNA or mismatched double-stranded DNA and polynucleotides, releasing free uracil.. Functionally, excises uracil residues from the DNA which can arise as a result of misincorporation of dUMP residues by DNA polymerase or due to deamination of cytosine. This Lactiplantibacillus plantarum (strain ATCC BAA-793 / NCIMB 8826 / WCFS1) (Lactobacillus plantarum) protein is Uracil-DNA glycosylase.